Reading from the N-terminus, the 605-residue chain is Progranulin (605 aa).

The first 17 residues, 1-17 (MWTLVGWTILVAGLVAG), serve as a signal peptide directing secretion. 2 disulfides stabilise this stretch: cysteine 126–cysteine 139 and cysteine 133–cysteine 149. A glycan (N-linked (GlcNAc...) asparagine) is linked at asparagine 197. 6 cysteine pairs are disulfide-bonded: cysteine 297–cysteine 309, cysteine 303–cysteine 319, cysteine 310–cysteine 327, cysteine 320–cysteine 334, cysteine 328–cysteine 341, and cysteine 335–cysteine 348. Residues 359–386 (QKTPAQPSRPSQPSPPGPPGPPSPPGPL) are disordered. Residues 368-385 (PSQPSPPGPPGPPSPPGP) show a composition bias toward pro residues. 2 cysteine pairs are disulfide-bonded: cysteine 392/cysteine 404 and cysteine 398/cysteine 414.

This sequence belongs to the granulin family. In terms of assembly, progranulin is secreted as a homodimer. Interacts with SLPI; interaction protects progranulin from proteolysis. Interacts (via region corresponding to granulin-7 peptide) with CTSD; stabilizes CTSD and increases its proteolytic activity. Interacts (via region corresponding to granulin-7 peptide) with SORT1; this interaction mediates endocytosis and lysosome delivery of progranulin; interaction occurs at the neuronal cell surface in a stressed nervous system. Interacts with PSAP; facilitates lysosomal delivery of progranulin from the extracellular space and the biosynthetic pathway. Forms a complex with PSAP and M6PR; PSAP bridges the binding between progranulin and M6PR. Forms a complex with PSAP and SORT1; progranulin bridges the interaction between PSAP and SORT1; facilitates lysosomal targeting of PSAP via SORT1; interaction enhances PSAP uptake in primary cortical neurons. Interacts (via regions corresponding to granulin-2 and granulin-7 peptides) with GBA1; this interaction prevents aggregation of GBA1-SCARB2 complex via interaction with HSPA1A upon stress. Interacts (via region corresponding to granulin-7 peptide) with HSPA1A; mediates recruitment of HSPA1A to GBA1 and prevents GBA1 aggregation in response to stress. In terms of processing, cleaved by ELANE; proteolysis is blocked by SLPI and is concentration- and time-dependent and induces CXCL8/IL-8 production; granulin-3 and granulin-4 are resistant to ELANE. Cleaved by CTSL in lysosome thus regulating the maturation and turnover of progranulin within the lysosome.

It localises to the secreted. It is found in the lysosome. In terms of biological role, secreted protein that acts as a key regulator of lysosomal function and as a growth factor involved in inflammation, wound healing and cell proliferation. Regulates protein trafficking to lysosomes, and also the activity of lysosomal enzymes. Also facilitates the acidification of lysosomes, causing degradation of mature CTSD by CTSB. In addition, functions as a wound-related growth factor that acts directly on dermal fibroblasts and endothelial cells to promote division, migration and the formation of capillary-like tubule structures. Also promotes epithelial cell proliferation by blocking TNF-mediated neutrophil activation preventing release of oxidants and proteases. Moreover, modulates inflammation in neurons by preserving neurons survival, axonal outgrowth and neuronal integrity. Functionally, inhibits epithelial cell proliferation and induces epithelial cells to secrete IL-8. Its function is as follows. Stabilizes CTSD through interaction with CTSD leading to maintain its aspartic-type peptidase activity. In Cavia porcellus (Guinea pig), this protein is Progranulin (GRN).